Consider the following 541-residue polypeptide: Beta-hexosaminidase subunit A2 (541 aa).

The N-terminal stretch at 1–21 is a signal peptide; it reads MINKFLTIFLIFSIVIIKVLS. The Proton donor role is filled by Glu314. Asn322, Asn336, Asn356, Asn435, and Asn483 each carry an N-linked (GlcNAc...) asparagine glycan.

Belongs to the glycosyl hydrolase 20 family.

Its subcellular location is the lysosome. It catalyses the reaction Hydrolysis of terminal non-reducing N-acetyl-D-hexosamine residues in N-acetyl-beta-D-hexosaminides.. Responsible for the degradation of GM2 gangliosides, and a variety of other molecules containing terminal N-acetyl hexosamines. This is Beta-hexosaminidase subunit A2 (hexa2) from Dictyostelium discoideum (Social amoeba).